The sequence spans 102 residues: Small ribosomal subunit protein uS14 (102 aa).

It belongs to the universal ribosomal protein uS14 family. In terms of assembly, part of the 30S ribosomal subunit. Contacts proteins S3 and S10.

Binds 16S rRNA, required for the assembly of 30S particles and may also be responsible for determining the conformation of the 16S rRNA at the A site. The sequence is that of Small ribosomal subunit protein uS14 from Wolbachia pipientis subsp. Culex pipiens (strain wPip).